The chain runs to 399 residues: Bifunctional enzyme IspD/IspF (399 aa).

The 2-C-methyl-D-erythritol 4-phosphate cytidylyltransferase stretch occupies residues 1-235 (METWALILAA…MVEQPKTTVP (235 aa)). The segment at 236 to 399 (IVGYGYDVHK…IVIVTAIRIS (164 aa)) is 2-C-methyl-D-erythritol 2,4-cyclodiphosphate synthase. The a divalent metal cation site is built by D242 and H244. Residues 242–244 (DVH) and 275–276 (HS) each bind 4-CDP-2-C-methyl-D-erythritol 2-phosphate. H283 is a binding site for a divalent metal cation. Residues 297-299 (DIG), 302-306 (FPDSD), 373-376 (TTEE), and F380 contribute to the 4-CDP-2-C-methyl-D-erythritol 2-phosphate site.

In the N-terminal section; belongs to the IspD/TarI cytidylyltransferase family. IspD subfamily. It in the C-terminal section; belongs to the IspF family. A divalent metal cation serves as cofactor.

The enzyme catalyses 2-C-methyl-D-erythritol 4-phosphate + CTP + H(+) = 4-CDP-2-C-methyl-D-erythritol + diphosphate. The catalysed reaction is 4-CDP-2-C-methyl-D-erythritol 2-phosphate = 2-C-methyl-D-erythritol 2,4-cyclic diphosphate + CMP. The protein operates within isoprenoid biosynthesis; isopentenyl diphosphate biosynthesis via DXP pathway; isopentenyl diphosphate from 1-deoxy-D-xylulose 5-phosphate: step 2/6. It functions in the pathway isoprenoid biosynthesis; isopentenyl diphosphate biosynthesis via DXP pathway; isopentenyl diphosphate from 1-deoxy-D-xylulose 5-phosphate: step 4/6. In terms of biological role, bifunctional enzyme that catalyzes the formation of 4-diphosphocytidyl-2-C-methyl-D-erythritol from CTP and 2-C-methyl-D-erythritol 4-phosphate (MEP) (IspD), and catalyzes the conversion of 4-diphosphocytidyl-2-C-methyl-D-erythritol 2-phosphate (CDP-ME2P) to 2-C-methyl-D-erythritol 2,4-cyclodiphosphate (ME-CPP) with a corresponding release of cytidine 5-monophosphate (CMP) (IspF). This chain is Bifunctional enzyme IspD/IspF, found in Lawsonia intracellularis (strain PHE/MN1-00).